The sequence spans 172 residues: Envelope protein UL45 (172 aa).

Residues 1–27 (MPLRASEHAYRPLGPGTPPMRARLPAA) are Intravirion-facing. Residues 28-48 (AWVGVGTIIGGVVIIAALVLV) form a helical; Signal-anchor for type II membrane protein membrane-spanning segment. Residues 49-172 (PSRASWALSP…TSTRNALGLP (124 aa)) lie on the Virion surface side of the membrane.

This sequence belongs to the herpesviridae HHV-1 UL45 family.

It localises to the virion membrane. In terms of biological role, important virulence factor of HSV neurotropism. Seems to be required for glycoprotein B-induced fusion. Dispensable for growth in vitro. The chain is Envelope protein UL45 from Human herpesvirus 1 (strain KOS) (HHV-1).